A 118-amino-acid polypeptide reads, in one-letter code: Large ribosomal subunit protein uL18 (118 aa).

Residues 1–26 (MISKPDKNKIRQKRHRRVRGKLSGTA) are disordered. The span at 10–20 (IRQKRHRRVRG) shows a compositional bias: basic residues.

The protein belongs to the universal ribosomal protein uL18 family. Part of the 50S ribosomal subunit; part of the 5S rRNA/L5/L18/L25 subcomplex. Contacts the 5S and 23S rRNAs.

Functionally, this is one of the proteins that bind and probably mediate the attachment of the 5S RNA into the large ribosomal subunit, where it forms part of the central protuberance. In Streptococcus equi subsp. zooepidemicus (strain H70), this protein is Large ribosomal subunit protein uL18.